A 174-amino-acid chain; its full sequence is Mitochondrial holo-[acyl-carrier-protein] synthase (174 aa).

This sequence belongs to the P-Pant transferase superfamily. AcpS family.

It localises to the mitochondrion. It carries out the reaction apo-[ACP] + CoA = holo-[ACP] + adenosine 3',5'-bisphosphate + H(+). In terms of biological role, transfers the 4'-phosphopantetheine moiety from coenzyme A to a Ser of mitochondrial acyl-carrier-protein. The protein is Mitochondrial holo-[acyl-carrier-protein] synthase (PPT2) of Eremothecium gossypii (strain ATCC 10895 / CBS 109.51 / FGSC 9923 / NRRL Y-1056) (Yeast).